We begin with the raw amino-acid sequence, 138 residues long: Acidic phospholipase A2 AplTX-I (138 aa).

Positions 1–16 are cleaved as a signal peptide; sequence MRTLWIMAVLLLGVEG. 7 cysteine pairs are disulfide-bonded: Cys42–Cys131, Cys44–Cys60, Cys59–Cys111, Cys65–Cys138, Cys66–Cys104, Cys73–Cys97, and Cys91–Cys102. Residues Tyr43, Gly45, and Gly47 each contribute to the Ca(2+) site. The active site involves His63. Asp64 contributes to the Ca(2+) binding site. Asp105 is a catalytic residue.

Monomer. The cofactor is Ca(2+). In terms of tissue distribution, expressed by the venom gland.

The protein resides in the secreted. It catalyses the reaction a 1,2-diacyl-sn-glycero-3-phosphocholine + H2O = a 1-acyl-sn-glycero-3-phosphocholine + a fatty acid + H(+). With respect to regulation, inhibited by divalent cations different from calcium ions (cadmium, magnesium, manganese, zinc), since they act as competitive antagonists of this cofactor. Its function is as follows. Snake venom phospholipase A2 (PLA2) that triggers a high neuromuscular toxicity in chick biventer cervicis preparations, but not in mouse phrenic nerve-diaphragm (PND) preparations, suggesting a selective neurotoxin activity towards birds. Does not induce myotoxic, coagulant, anticoagulant, edema, and antibacterial activities. PLA2 catalyzes the calcium-dependent hydrolysis of the 2-acyl groups in 3-sn-phosphoglycerides. This chain is Acidic phospholipase A2 AplTX-I, found in Agkistrodon piscivorus leucostoma (Western cottonmouth).